Consider the following 100-residue polypeptide: Putative protein adenylyltransferase MJ0604 (100 aa).

The GSX(10)DXD motif motif lies at 29 to 43 (GSYARGDYTEESDID). Mg(2+)-binding residues include D41 and D43.

It belongs to the MntA antitoxin family. Mg(2+) is required as a cofactor.

It catalyses the reaction L-tyrosyl-[protein] + ATP = O-(5'-adenylyl)-L-tyrosyl-[protein] + diphosphate. The catalysed reaction is O-(5'-adenylyl)-L-tyrosyl-[protein] + ATP = O-[5'-(adenylyl-(5'-&gt;3')-adenylyl)]-L-tyrosyl-[protein] + diphosphate. Its function is as follows. Putative antitoxin component of a putative type VII toxin-antitoxin (TA) system. Its cognate toxin might be MJ0605, which it might AMPylate. This is Putative protein adenylyltransferase MJ0604 from Methanocaldococcus jannaschii (strain ATCC 43067 / DSM 2661 / JAL-1 / JCM 10045 / NBRC 100440) (Methanococcus jannaschii).